Reading from the N-terminus, the 335-residue chain is Beta-hexosaminidase (335 aa).

Substrate is bound by residues aspartate 60, arginine 68, arginine 133, and 163–164; that span reads KH. Histidine 176 functions as the Proton donor/acceptor in the catalytic mechanism. The active-site Nucleophile is aspartate 247.

The protein belongs to the glycosyl hydrolase 3 family. NagZ subfamily.

It localises to the cytoplasm. The enzyme catalyses Hydrolysis of terminal non-reducing N-acetyl-D-hexosamine residues in N-acetyl-beta-D-hexosaminides.. The protein operates within cell wall biogenesis; peptidoglycan recycling. Functionally, plays a role in peptidoglycan recycling by cleaving the terminal beta-1,4-linked N-acetylglucosamine (GlcNAc) from peptide-linked peptidoglycan fragments, giving rise to free GlcNAc, anhydro-N-acetylmuramic acid and anhydro-N-acetylmuramic acid-linked peptides. In Stenotrophomonas maltophilia (strain R551-3), this protein is Beta-hexosaminidase.